Here is a 1070-residue protein sequence, read N- to C-terminus: Error-prone DNA polymerase (1070 aa).

It belongs to the DNA polymerase type-C family. DnaE2 subfamily.

Its subcellular location is the cytoplasm. The enzyme catalyses DNA(n) + a 2'-deoxyribonucleoside 5'-triphosphate = DNA(n+1) + diphosphate. DNA polymerase involved in damage-induced mutagenesis and translesion synthesis (TLS). It is not the major replicative DNA polymerase. This Aromatoleum aromaticum (strain DSM 19018 / LMG 30748 / EbN1) (Azoarcus sp. (strain EbN1)) protein is Error-prone DNA polymerase.